The primary structure comprises 358 residues: Trans-enoyl reductase pvhC (358 aa).

48-51 (VDSK) is an NADP(+) binding site. Substrate is bound at residue 134 to 141 (ISFLTSGL). NADP(+) contacts are provided by residues 169–172 (SSSC), 192–195 (SPHN), Tyr-210, and 257–258 (LE). 278–282 (GPSLL) lines the substrate pocket. 347-348 (VS) lines the NADP(+) pocket.

This sequence belongs to the zinc-containing alcohol dehydrogenase family. As to quaternary structure, monomer.

It functions in the pathway secondary metabolite biosynthesis. Functionally, trans-enoyl reductase; part of the gene cluster that mediates the biosynthesis of varicidin A, an antifungal natural product containing a cis-octahydrodecalin core. The PKS module of pvhA together with the enoylreductase pvhC catalyze the formation of the polyketide unit which is then conjugated to L-isoleucine by the condensation domain of the NRPS module. Activity of the Dieckmann cyclase domain (RED) of pvhA results in release of an acyclic tetramate. The cytochrome P450 monooxygenase pvhE then catalyzes the oxidation of the C21 methyl group to a to carboxylate group. The methyltransferase pvhD then further methylates the pvhE product. The Diels-Alderase pvhB is able to catalyze Diels-Alder cycloaddition using both pvhE and pvhD products as substrates to form the decalin ring, yielding varicidin B and A, respectively. This chain is Trans-enoyl reductase pvhC, found in Talaromyces variabilis (Penicillium variabile).